Reading from the N-terminus, the 319-residue chain is HPr kinase/phosphorylase (319 aa).

Active-site residues include His144 and Lys165. 159–166 serves as a coordination point for ATP; it reads GKSGIGKS. Ser166 contributes to the Mg(2+) binding site. Residue Asp183 is the Proton acceptor; for phosphorylation activity. Proton donor; for dephosphorylation activity of the active site. The tract at residues 207–216 is important for the catalytic mechanism of both phosphorylation and dephosphorylation; sequence MEIRGLGVIN. A Mg(2+)-binding site is contributed by Glu208. Arg249 is an active-site residue. The interval 270–275 is important for the catalytic mechanism of dephosphorylation; it reads PVRPGR.

Belongs to the HPrK/P family. In terms of assembly, homohexamer. The cofactor is Mg(2+).

The enzyme catalyses [HPr protein]-L-serine + ATP = [HPr protein]-O-phospho-L-serine + ADP + H(+). It catalyses the reaction [HPr protein]-O-phospho-L-serine + phosphate + H(+) = [HPr protein]-L-serine + diphosphate. In terms of biological role, catalyzes the ATP- as well as the pyrophosphate-dependent phosphorylation of a specific serine residue in HPr, a phosphocarrier protein of the phosphoenolpyruvate-dependent sugar phosphotransferase system (PTS). HprK/P also catalyzes the pyrophosphate-producing, inorganic phosphate-dependent dephosphorylation (phosphorolysis) of seryl-phosphorylated HPr (P-Ser-HPr). This chain is HPr kinase/phosphorylase, found in Geobacter sulfurreducens (strain ATCC 51573 / DSM 12127 / PCA).